The primary structure comprises 305 residues: uncharacterized protein (305 aa).

Residues 8–28 (IGALVTAVIAIGIVFSHMILF) form a helical membrane-spanning segment.

Its subcellular location is the membrane. This is an uncharacterized protein from Bacillus subtilis (strain 168).